The chain runs to 298 residues: Enoyl-CoA hydratase AFT6-1 (298 aa).

Residues 1 to 39 (MTYSTTKSVAMNPDEDAPPSDINSSGRLMSHSEVEPRGN) are disordered.

It belongs to the enoyl-CoA hydratase/isomerase family.

It carries out the reaction a (3S)-3-hydroxyacyl-CoA = a (2E)-enoyl-CoA + H2O. The enzyme catalyses a 4-saturated-(3S)-3-hydroxyacyl-CoA = a (3E)-enoyl-CoA + H2O. The protein operates within mycotoxin biosynthesis. In terms of biological role, enoyl-CoA hydratase; part of the gene clusters that mediate the biosynthesis of the host-selective toxins (HSTs) AF-toxins responsible for Alternaria black spot of strawberry disease by the strawberry pathotype. AF-toxin I and III are valine derivatives of 2,3-dyhydroxy-isovaleric acid and 2-hydroxy-isovaleric acid respectively, while AF II is an isoleucine derivative of 2-hydroxy-valeric acid. These derivatives are bound to a 9,10-epoxy-8-hydroxy-9-methyl-decatrienoic acid (EDA) moiety. On cellular level, AF-toxin affects plasma membrane of susceptible cells and cause a sudden increase in loss of K(+) after a few minutes of toxin treatment. The aldo-keto reductase AFTS1 catalyzes the conversion of 2-keto-isovaleric acid (2-KIV) to 2-hydroxy-isovaleric acid (2-HIV) by reduction of its ketone to an alcohol. The acyl-CoA ligase AFT1, the hydrolase AFT2 and the enoyl-CoA hydratases AFT3 and AFT6, but also the polyketide synthase AFT9, the acyl-CoA dehydrogenase AFT10, the cytochrome P450 monooxygenase AFT11 and the oxidoreductase AFT12 are all involved in the biosynthesis of the AK-, AF- and ACT-toxin common EDA structural moiety. The exact function of each enzyme, and of additional enzymes identified within the AF-toxin clusters have still to be determined. This is Enoyl-CoA hydratase AFT6-1 from Alternaria alternata (Alternaria rot fungus).